The chain runs to 172 residues: uncharacterized protein (172 aa).

The N-terminal stretch at 1–22 is a signal peptide; it reads MKLFQLLLLVLTISSFIISNNG. Topologically, residues 23-140 are extracellular; it reads LVESHQGRMH…FSYENSSNET (118 aa). The segment at 27 to 69 is disordered; it reads HQGRMHRGSGERHHRAGGNQQQPQPPSEQQVESSYNSNDDGSS. Positions 29 to 42 are enriched in basic residues; the sequence is GRMHRGSGERHHRA. A compositionally biased stretch (low complexity) spans 53–69; the sequence is SEQQVESSYNSNDDGSS. 2 N-linked (GlcNAc...) asparagine glycosylation sites follow: Asn-135 and Asn-138. The helical transmembrane segment at 141-161 threads the bilayer; sequence IVIYINPVTLVFTLVLLLTFI. The Cytoplasmic portion of the chain corresponds to 162-172; sequence VLTITQSLRKY.

The protein localises to the membrane. This is an uncharacterized protein from Dictyostelium discoideum (Social amoeba).